The following is a 149-amino-acid chain: uncharacterized protein (149 aa).

The HotDog ACOT-type domain occupies 16 to 128 (PAGEPAIRVI…LFTFVAIDED (113 aa)).

It belongs to the acyl coenzyme A hydrolase family.

This is an uncharacterized protein from Zymomonas mobilis subsp. mobilis (strain ATCC 31821 / ZM4 / CP4).